A 479-amino-acid chain; its full sequence is ATP-dependent RNA helicase DDX19B (479 aa).

Alanine 2 bears the N-acetylalanine mark. The tract at residues 2–300 (ATDSWALAVD…DPNVIKLKRE (299 aa)) is N-terminal lobe. Residues 34 to 54 (TNGAVVKTNANAEKTDEEEKE) form a disordered region. The interval 55–68 (DRAAQSLLNKLIRS) is N-terminal helix. Positions 92–120 (KSFEELRLKPQLLQGVYAMGFNRPSKIQE) match the Q motif motif. ATP is bound by residues glutamine 119 and 138 to 145 (SQSGTGKT). The Helicase ATP-binding domain occupies 125–295 (LMLAEPPQNL…QKVVPDPNVI (171 aa)). Residues 242–245 (DEAD) carry the DEAD box motif. The tract at residues 301 to 479 (EETLDTIKQY…DLDEIEKIAN (179 aa)) is C-terminal lobe. The region spanning 306–474 (TIKQYYVLCS…RLDTDDLDEI (169 aa)) is the Helicase C-terminal domain. ATP-binding residues include arginine 429 and arginine 432.

This sequence belongs to the DEAD box helicase family. DDX19/DBP5 subfamily. As to quaternary structure, associates with the nuclear pore complex via interaction with NUP214. Interacts with NUP214 or RNA in a mutually exclusive manner.

The protein localises to the cytoplasm. It localises to the nucleus. The protein resides in the nucleoplasm. It catalyses the reaction ATP + H2O = ADP + phosphate + H(+). ATP-dependent RNA helicase involved in mRNA export from the nucleus. Rather than unwinding RNA duplexes, DDX19B functions as a remodeler of ribonucleoprotein particles, whereby proteins bound to nuclear mRNA are dissociated and replaced by cytoplasmic mRNA binding proteins. The chain is ATP-dependent RNA helicase DDX19B (DDX19B) from Homo sapiens (Human).